The chain runs to 403 residues: DNA primase DnaG (403 aa).

One can recognise a Toprim domain in the interval 172-248 (DSVIIVEGRA…HIDYIARAPP (77 aa)). Residues Glu-178, Asp-222, and Asp-224 each contribute to the Mg(2+) site. A disordered region spans residues 279–300 (AAGEKTEAPAQPTQQQPPPAEA).

It belongs to the archaeal DnaG primase family. In terms of assembly, forms a ternary complex with MCM helicase and DNA. Component of the archaeal exosome complex. The cofactor is Mg(2+).

The enzyme catalyses ssDNA + n NTP = ssDNA/pppN(pN)n-1 hybrid + (n-1) diphosphate.. Its function is as follows. RNA polymerase that catalyzes the synthesis of short RNA molecules used as primers for DNA polymerase during DNA replication. Also part of the exosome, which is a complex involved in RNA degradation. Acts as a poly(A)-binding protein that enhances the interaction between heteromeric, adenine-rich transcripts and the exosome. The chain is DNA primase DnaG from Pyrobaculum neutrophilum (strain DSM 2338 / JCM 9278 / NBRC 100436 / V24Sta) (Thermoproteus neutrophilus).